Consider the following 119-residue polypeptide: NAD(P)H-quinone oxidoreductase subunit M (119 aa).

It belongs to the complex I NdhM subunit family. NDH-1 can be composed of about 15 different subunits; different subcomplexes with different compositions have been identified which probably have different functions.

The protein localises to the cell inner membrane. It catalyses the reaction a plastoquinone + NADH + (n+1) H(+)(in) = a plastoquinol + NAD(+) + n H(+)(out). The enzyme catalyses a plastoquinone + NADPH + (n+1) H(+)(in) = a plastoquinol + NADP(+) + n H(+)(out). Its function is as follows. NDH-1 shuttles electrons from an unknown electron donor, via FMN and iron-sulfur (Fe-S) centers, to quinones in the respiratory and/or the photosynthetic chain. The immediate electron acceptor for the enzyme in this species is believed to be plastoquinone. Couples the redox reaction to proton translocation, and thus conserves the redox energy in a proton gradient. Cyanobacterial NDH-1 also plays a role in inorganic carbon-concentration. The polypeptide is NAD(P)H-quinone oxidoreductase subunit M (Gloeobacter violaceus (strain ATCC 29082 / PCC 7421)).